The chain runs to 363 residues: 3-isopropylmalate dehydrogenase (363 aa).

Gly78 to Glu91 contributes to the NAD(+) binding site. 4 residues coordinate substrate: Arg99, Arg109, Arg138, and Asp227. The Mg(2+) site is built by Asp227, Asp251, and Asp255. Gly285–Asn297 serves as a coordination point for NAD(+).

The protein belongs to the isocitrate and isopropylmalate dehydrogenases family. LeuB type 1 subfamily. In terms of assembly, homodimer. Requires Mg(2+) as cofactor. It depends on Mn(2+) as a cofactor.

The protein localises to the cytoplasm. It carries out the reaction (2R,3S)-3-isopropylmalate + NAD(+) = 4-methyl-2-oxopentanoate + CO2 + NADH. The protein operates within amino-acid biosynthesis; L-leucine biosynthesis; L-leucine from 3-methyl-2-oxobutanoate: step 3/4. In terms of biological role, catalyzes the oxidation of 3-carboxy-2-hydroxy-4-methylpentanoate (3-isopropylmalate) to 3-carboxy-4-methyl-2-oxopentanoate. The product decarboxylates to 4-methyl-2 oxopentanoate. In Buchnera aphidicola subsp. Uroleucon helianthicola, this protein is 3-isopropylmalate dehydrogenase.